A 194-amino-acid polypeptide reads, in one-letter code: DPY30 domain-containing protein 2 (194 aa).

Residues 126–172 (EAFEKEPLKQESLPGTSDMIPGMPQQSPSSEPSVSSQVDLNTGTPQE) form a disordered region. Over residues 149 to 163 (PQQSPSSEPSVSSQV) the composition is skewed to low complexity.

Belongs to the dpy-30 family.

The sequence is that of DPY30 domain-containing protein 2 (DYDC2) from Bos taurus (Bovine).